Reading from the N-terminus, the 248-residue chain is MERASLIQKAKLAEQAERYEDMAAFMKSAVEKGEELSCEERNLLSVAYKNVVGGQRAAWRVLSSIEQKSNEESSEEKGPEVQEYREKVETELRGVCDTVLGLLDTHLIKEAGDAESRVFYLKMKGDYYRYLAEVATGDDKKRIIDSARSAYQEAMDISKKEMPPTNPIRLGLALNFSVFHYEIANSPEEAISLAKTTFDEAMADLHTLSEDSYKDSTLIMQLLRDNLTLWTADNAGEEGGEAPEEPQS.

Ser-5, Ser-74, and Ser-248 each carry phosphoserine.

Belongs to the 14-3-3 family. Homodimer. Interacts with KRT17 and SAMSN1. Found in a complex with XPO7, EIF4A1, ARHGAP1, VPS26A, VPS29 and VPS35. Interacts with GAB2. Interacts with SRPK2. Interacts with COPS6. Interacts with COP1; this interaction leads to proteasomal degradation. Interacts with the 'Thr-369' phosphorylated form of DAPK2. Interacts with PI4KB. Interacts with SLITRK1. Interacts with LRRK2; this interaction is dependent on LRRK2 phosphorylation. Interacts with PKP3 (via N-terminus); the interaction maintains the cytoplasmic pool of PKP3, facilitates PKP3 exchange at desmosomes and restricts PKP3 localization to existing desmosome cell junctions. Interacts with LCP2. Ubiquitinated. Ubiquitination by RFFL induces proteasomal degradation and indirectly regulates p53/TP53 activation.

The protein localises to the cytoplasm. It is found in the nucleus. It localises to the secreted. Adapter protein implicated in the regulation of a large spectrum of both general and specialized signaling pathways. Binds to a large number of partners, usually by recognition of a phosphoserine or phosphothreonine motif. Binding generally results in the modulation of the activity of the binding partner. Promotes cytosolic retention of GBP1 GTPase by binding to phosphorylated GBP1, thereby inhibiting the innate immune response. Also acts as a TP53/p53-regulated inhibitor of G2/M progression. When bound to KRT17, regulates protein synthesis and epithelial cell growth by stimulating Akt/mTOR pathway. Acts to maintain desmosome cell junction adhesion in epithelial cells via interacting with and sequestering PKP3 to the cytoplasm, thereby restricting its translocation to existing desmosome structures and therefore maintaining desmosome protein homeostasis. Also acts to facilitate PKP3 exchange at desmosome plaques, thereby maintaining keratinocyte intercellular adhesion. May also regulate MDM2 autoubiquitination and degradation and thereby activate p53/TP53. The sequence is that of 14-3-3 protein sigma (SFN) from Bos taurus (Bovine).